The chain runs to 201 residues: Cell division protein SepF (201 aa).

Positions 27–38 (VQERTSVQRDSR) are enriched in basic and acidic residues. The segment at 27-99 (VQERTSVQRD…PRIQNKDSVR (73 aa)) is disordered. Composition is skewed to polar residues over residues 43 to 54 (QEASQRSHMTNS) and 82 to 92 (DNSYQQATPRI).

It belongs to the SepF family. In terms of assembly, homodimer. Interacts with FtsZ.

It is found in the cytoplasm. Cell division protein that is part of the divisome complex and is recruited early to the Z-ring. Probably stimulates Z-ring formation, perhaps through the cross-linking of FtsZ protofilaments. Its function overlaps with FtsA. This chain is Cell division protein SepF, found in Streptococcus agalactiae serotype III (strain NEM316).